Here is a 494-residue protein sequence, read N- to C-terminus: Probable cytochrome P450 518A1 (494 aa).

A helical transmembrane segment spans residues 1–21; sequence MSILIILIISIIFYLIFDFLY. Residue Cys438 participates in heme binding.

This sequence belongs to the cytochrome P450 family. Requires heme as cofactor.

It is found in the membrane. This is Probable cytochrome P450 518A1 (cyp518A1) from Dictyostelium discoideum (Social amoeba).